A 2669-amino-acid polypeptide reads, in one-letter code: Nucleosome-remodeling factor subunit NURF301 (2669 aa).

The span at 1-12 (MSGRGSRKRGRP) shows a compositional bias: basic residues. The tract at residues 1–121 (MSGRGSRKRG…EEDKSDNEDD (121 aa)) is required for function in nucleosome sliding. The interval 1–125 (MSGRGSRKRG…SDNEDDMLLT (125 aa)) is disordered. The segment at residues 6–18 (SRKRGRPPKTPNE) is a DNA-binding region (a.T hook). Residues 38–56 (GKSQPSTPSASRGISPQSD) show a composition bias toward polar residues. Phosphoserine occurs at positions 40, 52, 55, 59, and 62. Over residues 66 to 82 (HTNRSRGSAAKRGRGRK) the composition is skewed to basic residues. Acidic residues predominate over residues 109–125 (GDSEEDKSDNEDDMLLT). A DDT domain is found at 188 to 248 (NTHVLRALSI…LKAILREEDA (61 aa)). The PHD-type 1 zinc finger occupies 339–386 (DDHCRVCHRLGDLLCCETCPAVYHLECVDPPMNDVPTEDWQCGLCRSH). Residues 460–515 (RLHSQITERRDEIERQMKLTETLTNEHKHTKRSVIEIEQEAKNELLEKEVLDEDEK) adopt a coiled-coil conformation. Residues 505 to 538 (LEKEVLDEDEKDGDAKSESQSIEGTKKQEECKMV) are disordered. Residues 528 to 537 (GTKKQEECKM) are compositionally biased toward basic and acidic residues. Residues 688–720 (LQRITSAEREERKKLEKREKRERDDEEERNRLA) adopt a coiled-coil conformation. Disordered regions lie at residues 1026-1048 (EGKR…AESE), 1135-1159 (TGLN…NQKS), and 1406-1425 (RSGL…EPQI). Position 1417 is a phosphoserine (S1417). Position 1527 is a phosphothreonine (T1527). The segment covering 1559 to 1590 (SRTGGANTAAAAASPTVGGSTSTQSNPSTSTP) has biased composition (low complexity). Disordered stretches follow at residues 1559–1596 (SRTG…VQII), 2181–2203 (INNG…ITTN), and 2283–2307 (TNEW…QTDD). Residues 2283 to 2293 (TNEWETCSRGS) show a composition bias toward polar residues. A coiled-coil region spans residues 2338 to 2373 (KNDEVAELGEQKQSQLERHKELLKKNILRKRSLLER). The interval 2382–2432 (DVKTKVQRHVRPLSNASPDEQSENERSGEPNLDFKRTEVQNPRHGAGRPKK) is disordered. S2395, S2398, and S2403 each carry phosphoserine. Over residues 2404–2419 (ENERSGEPNLDFKRTE) the composition is skewed to basic and acidic residues. The segment at 2481–2546 (EFICIDCKRA…EYVCPECQRK (66 aa)) adopts a PHD-type 2 zinc-finger fold. One can recognise a Bromo domain in the interval 2556-2660 (KLTSNDVEEL…SYFVQKIKNF (105 aa)).

It belongs to the BPTF family. In terms of assembly, component of the NURF complex composed of Caf1-55, E(bx), Nurf-38 and Iswi. Interacts with Trl. Interacts with histone H3-K4Me3.

It localises to the nucleus. Functionally, histone-binding component of NURF (nucleosome remodeling factor), a complex which catalyzes ATP-dependent nucleosome sliding and facilitates transcription of chromatin. Specifically recognizes H3 tails trimethylated on 'Lys-4' (H3K4me3), which mark transcription start sites of virtually all active genes. Required for homeotic gene expression, proper larval blood cell development, normal male X chromosome morphology, ecdysteroid signaling and metamorphosis. This chain is Nucleosome-remodeling factor subunit NURF301 (E(bx)), found in Drosophila melanogaster (Fruit fly).